The chain runs to 243 residues: Transcription factor TFIIS homolog (243 aa).

The TFIIS central domain maps to 77–201; that stretch reads MRDIIQMMFF…SQQKVAEKTS (125 aa). A TFIIS-type zinc finger spans residues 202–242; it reads QLYKCPNCKQRMCTYREVQTRALDEPSTIFCTCKKCGHEFI. Residues Cys-206, Cys-209, Cys-234, and Cys-237 each coordinate Zn(2+).

The protein belongs to the TFS-II family.

Putative initiation factor. Necessary for efficient transcription elongation past template-encoded arresting sites. In Ornithodoros (relapsing fever ticks), this protein is Transcription factor TFIIS homolog.